The primary structure comprises 419 residues: Tyrosine--tRNA ligase (419 aa).

L-tyrosine is bound at residue tyrosine 34. The 'HIGH' region motif lies at 39-48; it reads PTADSLHIGH. Residues tyrosine 169, glutamine 173, and aspartate 176 each contribute to the L-tyrosine site. Residues 230 to 234 carry the 'KMSKS' region motif; sequence KFGKT. An ATP-binding site is contributed by lysine 233. Residues 352–419 form the S4 RNA-binding domain; sequence VPLVELLVSA…KKKYYLIRYA (68 aa).

It belongs to the class-I aminoacyl-tRNA synthetase family. TyrS type 1 subfamily. In terms of assembly, homodimer.

It localises to the cytoplasm. It carries out the reaction tRNA(Tyr) + L-tyrosine + ATP = L-tyrosyl-tRNA(Tyr) + AMP + diphosphate + H(+). In terms of biological role, catalyzes the attachment of tyrosine to tRNA(Tyr) in a two-step reaction: tyrosine is first activated by ATP to form Tyr-AMP and then transferred to the acceptor end of tRNA(Tyr). In Geobacillus stearothermophilus (Bacillus stearothermophilus), this protein is Tyrosine--tRNA ligase (tyrS).